Consider the following 131-residue polypeptide: Small ribosomal subunit protein eS8 (131 aa).

The disordered stretch occupies residues 1 to 38 (MKLGAYYKGGDLKKPSGGKKRKVRRTKKKALGGGPPQI). Over residues 16–30 (SGGKKRKVRRTKKKA) the composition is skewed to basic residues.

This sequence belongs to the eukaryotic ribosomal protein eS8 family. Part of the 30S ribosomal subunit.

The chain is Small ribosomal subunit protein eS8 from Pyrobaculum arsenaticum (strain DSM 13514 / JCM 11321 / PZ6).